The following is a 306-amino-acid chain: Reaction center protein M chain (306 aa).

3 helical membrane-spanning segments follow: residues 53 to 79 (GTTG…ASVN), 111 to 140 (GGWW…RALK), and 143 to 168 (THTA…LLMG). Residues His-181 and His-201 each contribute to the (7R,8Z)-bacteriochlorophyll b site. The helical transmembrane segment at 198–226 (NPFHMLSIAFLYGSALLSAMHGATILAVS) threads the bilayer. Positions 218 and 233 each coordinate Fe cation. Trp-251 serves as a coordination point for a ubiquinone. The chain crosses the membrane as a helical span at residues 260 to 286 (TMESIHRWAWWFAVLCTFTGAIGILLT). His-265 contacts Fe cation.

It belongs to the reaction center PufL/M/PsbA/D family. As to quaternary structure, reaction center is composed of four bacteriochlorophylls, two bacteriopheophytins, two ubiquinones, one iron, and three highly hydrophobic polypeptide chains (designated L, M, and H).

The protein resides in the cellular chromatophore membrane. Functionally, the reaction center is a membrane-bound complex that mediates the initial photochemical event in the electron transfer process of photosynthesis. This chain is Reaction center protein M chain (pufM), found in Rhodospirillum rubrum.